Consider the following 202-residue polypeptide: Uclacyanin-2 (202 aa).

The first 29 residues, 1-29, serve as a signal peptide directing secretion; sequence MAMNGLSKMAVAAATALLLVLTIVPGAVA. The Phytocyanin domain occupies 30 to 126; that stretch reads VTYTIEWTTG…GMKLAVNVVA (97 aa). His65 contributes to the Cu cation binding site. Residue Asn86 is glycosylated (N-linked (GlcNAc...) asparagine). Positions 106, 111, and 118 each coordinate Cu cation. Residues 129 to 181 are disordered; it reads AGPPATPTPPSSTPGTPTTPESPPSGGSPTPTTPTPGAGSTSPPPPPKASGAS. The segment covering 141 to 169 has biased composition (low complexity); that stretch reads TPGTPTTPESPPSGGSPTPTTPTPGAGST. The GPI-anchor amidated serine moiety is linked to residue Ser178. The propeptide at 179-202 is removed in mature form; the sequence is GASKGVMSYVLVGVSMVLGYGLWM.

It is found in the cell membrane. Its function is as follows. Probably acts as an electron carrier involved in oxygen activation and/or lignin formation. This chain is Uclacyanin-2, found in Arabidopsis thaliana (Mouse-ear cress).